The following is a 79-amino-acid chain: Cyclin-dependent kinases regulatory subunit 2 (79 aa).

At Lys4 the chain carries N6-acetyllysine.

This sequence belongs to the CKS family. Forms a homohexamer that can probably bind six kinase subunits.

In terms of biological role, binds to the catalytic subunit of the cyclin dependent kinases and is essential for their biological function. This is Cyclin-dependent kinases regulatory subunit 2 (Cks2) from Mus musculus (Mouse).